The sequence spans 311 residues: Mitochondrial arginine transporter BAC1 (311 aa).

Solcar repeat units lie at residues 12-101 (FGFY…AKLF), 111-203 (PRPE…LRYH), and 219-305 (VDMG…SMKM). A run of 6 helical transmembrane segments spans residues 18 to 38 (YVAG…FDTV), 76 to 96 (GATS…GIYS), 113 to 133 (PEII…VLCP), 178 to 197 (GGSA…FTVY), 222 to 242 (GIGV…VLPF), and 288 to 308 (AFPA…MLGI).

Belongs to the mitochondrial carrier (TC 2.A.29) family. As to expression, high expression in flowers and siliques. Lower expression in leaves and stems.

It is found in the mitochondrion inner membrane. Its activity is regulated as follows. Inhibited by mercuric chloride. Mitochondrial arginine transporter that catalyzes the counter-exchange of arginine with lysine, ornithine, arginine and histidine. Substrate preference in reconstituted proteoliposomes is arginine &gt; lysine &gt; ornithine &gt; histidine. May be involved in the delivery of arginine, released from seed reserves, to mitochondrial arginase and the export of ornithine. The protein is Mitochondrial arginine transporter BAC1 (BAC1) of Arabidopsis thaliana (Mouse-ear cress).